A 233-amino-acid chain; its full sequence is Large ribosomal subunit protein uL1 (233 aa).

This sequence belongs to the universal ribosomal protein uL1 family. In terms of assembly, part of the 50S ribosomal subunit.

Functionally, binds directly to 23S rRNA. The L1 stalk is quite mobile in the ribosome, and is involved in E site tRNA release. Its function is as follows. Protein L1 is also a translational repressor protein, it controls the translation of the L11 operon by binding to its mRNA. In Geotalea uraniireducens (strain Rf4) (Geobacter uraniireducens), this protein is Large ribosomal subunit protein uL1.